A 159-amino-acid chain; its full sequence is Phosphopantetheine adenylyltransferase (159 aa).

Serine 9 contributes to the substrate binding site. Residues 9 to 10 (SF) and histidine 17 each bind ATP. Residues lysine 41, leucine 73, and lysine 87 each coordinate substrate. Residues 88 to 90 (GLR), glutamate 98, and 123 to 129 (YSYLSSS) each bind ATP.

This sequence belongs to the bacterial CoaD family. Homohexamer. Requires Mg(2+) as cofactor.

The protein localises to the cytoplasm. It catalyses the reaction (R)-4'-phosphopantetheine + ATP + H(+) = 3'-dephospho-CoA + diphosphate. It participates in cofactor biosynthesis; coenzyme A biosynthesis; CoA from (R)-pantothenate: step 4/5. Its function is as follows. Reversibly transfers an adenylyl group from ATP to 4'-phosphopantetheine, yielding dephospho-CoA (dPCoA) and pyrophosphate. In Clostridium botulinum (strain Eklund 17B / Type B), this protein is Phosphopantetheine adenylyltransferase.